A 195-amino-acid polypeptide reads, in one-letter code: Glycerol-3-phosphate acyltransferase (195 aa).

5 helical membrane-spanning segments follow: residues 3-23 (FQVV…GFIL), 52-72 (LALL…AIAQ), 80-100 (ILFL…YLFF), 113-133 (LIFI…ICFL), and 147-167 (LIAL…IFAI).

Belongs to the PlsY family. As to quaternary structure, probably interacts with PlsX.

It localises to the cell inner membrane. The catalysed reaction is an acyl phosphate + sn-glycerol 3-phosphate = a 1-acyl-sn-glycero-3-phosphate + phosphate. Its pathway is lipid metabolism; phospholipid metabolism. Catalyzes the transfer of an acyl group from acyl-phosphate (acyl-PO(4)) to glycerol-3-phosphate (G3P) to form lysophosphatidic acid (LPA). This enzyme utilizes acyl-phosphate as fatty acyl donor, but not acyl-CoA or acyl-ACP. This chain is Glycerol-3-phosphate acyltransferase, found in Ehrlichia ruminantium (strain Gardel).